The following is a 387-amino-acid chain: Probable inactive shikimate kinase like 2, chloroplastic (387 aa).

Residues 1 to 71 (MAAFASGLAI…FNSFSCNCLS (71 aa)) constitute a chloroplast transit peptide. Positions 368-387 (NIKPPGWDPSSDTGPHPQFT) are disordered.

This sequence belongs to the shikimate kinase family.

The protein resides in the plastid. The protein localises to the chloroplast. The protein is Probable inactive shikimate kinase like 2, chloroplastic (SKL2) of Arabidopsis thaliana (Mouse-ear cress).